Consider the following 298-residue polypeptide: Probable alpha-L-glutamate ligase (298 aa).

Residues Leu108–Glu290 form the ATP-grasp domain. Residues Lys144, Asp181–Phe182, Asp190, and Arg214–Asn216 each bind ATP. Residues Asp251, Glu263, and Asn265 each contribute to the Mg(2+) site. Positions 251, 263, and 265 each coordinate Mn(2+).

Belongs to the RimK family. The cofactor is Mg(2+). It depends on Mn(2+) as a cofactor.

This Haemophilus influenzae (strain PittEE) protein is Probable alpha-L-glutamate ligase.